Here is a 77-residue protein sequence, read N- to C-terminus: Apelin (77 aa).

Positions 1 to 22 (MNVKILTLVIVLVVSLLCSASA) are cleaved as a signal peptide. Residues 21-77 (SAGPMASTEHSKEIEEVGSMRTPLRQNPARAGRSQRPAGWRRRRPRPRLSHKGPMPF) form a disordered region. Over residues 59–71 (GWRRRRPRPRLSH) the composition is skewed to basic residues.

The protein belongs to the apelin family.

The protein localises to the secreted. It localises to the extracellular space. Functionally, peptide hormone that functions as endogenous ligand for the G-protein-coupled apelin receptor (aplnra and/or aplnrb), that plays a role in cadiovascular homeostasis. Functions as a balanced agonist activating both G(i) protein pathway and beta-arrestin pathway of APLNR. Downstream G proteins activation, apelin can inhibit cAMP production and activate key intracellular effectors such as ERKs. On the other hand, APLNR activation induces beta-arrestin recruitment to the membrane leading to desensitization and internalization of the receptor. Apelin blunts cardiac hypertrophic induction from APLNR on response to pathological stimuli, but also induces myocardial hypertrophy under normal conditions. Involved in the regulation of cardiac precursor cell movements during gastrulation and heart morphogenesis. Plays a role in early coronary blood vessels formation. Mediates myocardial contractility in an ERK1/2-dependent manner. May also have a role in the central control of body fluid homeostasis. This is Apelin from Danio rerio (Zebrafish).